The chain runs to 377 residues: SH2/SH3 adapter protein Nck1 (377 aa).

Ala-2 carries the post-translational modification N-acetylalanine. Residues 2-61 (AEEVVVVAKFDYVAQQEQELDIKKNERLWLLDDSKSWWRVRNSMNKTGFVPSNYVERKNS) enclose the SH3 1 domain. Ser-85, Ser-91, and Ser-96 each carry phosphoserine. A Phosphotyrosine modification is found at Tyr-105. Residues 106–165 (DLNMPAFVKFNYMAEREDELSLIKGTKVIVMEKCSDGWWRGSYNGQIGWFPSNYVTEEGD) form the SH3 2 domain. Ser-166 is subject to Phosphoserine. One can recognise an SH3 3 domain in the interval 190–252 (QVLHVVQALY…PKNYVTIMQN (63 aa)). The 95-residue stretch at 282 to 376 (WYYGKVTRHQ…GEKLYLVKHL (95 aa)) folds into the SH2 domain.

As to quaternary structure, interacts (via SH2 domain and SH3 domain 2) with EGFR. Interacts with PAK1 and SOS1. Interacts (via SH3 domains) with PKN2. Associates with BLNK, PLCG1, VAV1 and NCK1 in a B-cell antigen receptor-dependent fashion. Interacts with SOCS7. This interaction is required for nuclear import. Part of a complex containing PPP1R15B, PP1 and NCK1. Interacts with RALGPS1. Interacts with CAV2 (tyrosine phosphorylated form). Interacts with ADAM15. Interacts with FASLG. Directly interacts with RASA1. Interacts with isoform 4 of MINK1. Interacts with FLT1 (tyrosine phosphorylated). Interacts with KDR (tyrosine phosphorylated). Interacts (via SH2 domain) with EPHB1; activates the JUN cascade to regulate cell adhesion. Interacts with EPHA2. Interacts (via SH2 domain) with PDGFRB (tyrosine phosphorylated). Interacts with the inactive form of EIF2AK2/PKR. Interacts with PTPN1. Interacts with INSR/insulin receptor (in response to insulin stimulation); this interaction may mediate PTPN1 recruitment leading to INSR dephosphorylation. Interacts with CD3E (via Proline-rich sequence); the interaction is ligand dependent but independent of tyrosine kinase activation. Interacts with EGFR. Interacts with IRS1. Phosphorylated on Ser and Tyr residues. Phosphorylated in response to activation of EGFR and FcERI. Phosphorylated by activated PDGFRB.

Its subcellular location is the cytoplasm. The protein resides in the endoplasmic reticulum. The protein localises to the nucleus. Its function is as follows. Adapter protein which associates with tyrosine-phosphorylated growth factor receptors, such as KDR and PDGFRB, or their cellular substrates. Maintains low levels of EIF2S1 phosphorylation by promoting its dephosphorylation by PP1. Plays a role in the DNA damage response, not in the detection of the damage by ATM/ATR, but for efficient activation of downstream effectors, such as that of CHEK2. Plays a role in ELK1-dependent transcriptional activation in response to activated Ras signaling. Modulates the activation of EIF2AK2/PKR by dsRNA. May play a role in cell adhesion and migration through interaction with ephrin receptors. Also acts as an adpater protein for the T cell receptor complex (TCR-CD3E). Upon ligand engagement, is recruited by CD3E and promotes maturation of the immune synapse and T cell activation. This is SH2/SH3 adapter protein Nck1 (Nck1) from Mus musculus (Mouse).